Consider the following 227-residue polypeptide: MVSLKSVLAAATAVSSAIAAPFDFVPRDNSTALQARQVTPNAEGWHNGYFYSWWSDGGGQVQYTNLEGSRYQVRWRNTGNFVGGKGWNPGTGRTINYGGYFNPQGNGYLAVYGWTRNPLVEYYVIESYGTYNPGSQAQYKGTFYTDGDQYDIFVSTRYNQPSIDGTRTFQQYWSIRKNKRVGGSVNMQNHFNAWQQHGMPLGQHYYQVVATEGYQSSGESDIYVQTH.

The first 19 residues, 1 to 19, serve as a signal peptide directing secretion; that stretch reads MVSLKSVLAAATAVSSAIA. The GH11 domain maps to 37-225; it reads QVTPNAEGWH…SSGESDIYVQ (189 aa). Glu-121 (nucleophile) is an active-site residue. Glu-212 functions as the Proton donor in the catalytic mechanism.

It belongs to the glycosyl hydrolase 11 (cellulase G) family.

It carries out the reaction Endohydrolysis of (1-&gt;4)-beta-D-xylosidic linkages in xylans.. It participates in glycan degradation; xylan degradation. In Humicola insolens (Soft-rot fungus), this protein is Endo-1,4-beta-xylanase 1.